A 221-amino-acid polypeptide reads, in one-letter code: Nuclear phosphoprotein UL3 homolog (221 aa).

Belongs to the alphaherpesvirinae HHV-1 UL3 family. In terms of processing, phosphorylated.

It is found in the host nucleus. This is Nuclear phosphoprotein UL3 homolog from Varicella-zoster virus (strain Dumas) (HHV-3).